The chain runs to 67 residues: Large ribosomal subunit protein bL35 (67 aa).

Basic residues predominate over residues 1–16 (MPKMKTKSGAKKRFRV). The segment at 1 to 25 (MPKMKTKSGAKKRFRVRPGGTVKRG) is disordered.

This sequence belongs to the bacterial ribosomal protein bL35 family.

The protein is Large ribosomal subunit protein bL35 of Polaromonas sp. (strain JS666 / ATCC BAA-500).